The chain runs to 173 residues: Photosystem I assembly protein Ycf3 (173 aa).

TPR repeat units follow at residues 36-69 (AFAYYRDGMAAQSEGEYAEALENYREALALEQDD), 73-106 (SYILYNMGLIYQSNGELDKALEYYHQALELNPRL), and 121-154 (GEQSLQAGDEETAEALFDEAAQYWIRAIRIAPNN).

Belongs to the Ycf3 family.

The protein resides in the cellular thylakoid membrane. Essential for the assembly of the photosystem I (PSI) complex. May act as a chaperone-like factor to guide the assembly of the PSI subunits. This chain is Photosystem I assembly protein Ycf3, found in Synechococcus sp. (strain JA-3-3Ab) (Cyanobacteria bacterium Yellowstone A-Prime).